Reading from the N-terminus, the 580-residue chain is Probable inositol transporter 2 (580 aa).

12 consecutive transmembrane segments (helical) span residues G36–I56, E71–A91, F106–V126, V129–A149, G156–I176, W189–P209, G275–M295, L315–I335, L343–Y363, F452–G472, I490–F510, and W521–V541.

This sequence belongs to the major facilitator superfamily. Sugar transporter (TC 2.A.1.1) family. Expressed in the tapetum, but not in pollen grains. Detected in leaf vascular tissue and in roots.

It localises to the cell membrane. Inhibited by nickel and to a lesser extent by cobalt. Plasma membrane inositol-proton symporter. Specific for several inositol epimers, such as myoinositol and scylloinositol. D-chiroinositol, mucoinositol, alloinositol and pinitol are also transported with a lower activity. Not active with galactinol and phytate. The protein is Probable inositol transporter 2 (INT2) of Arabidopsis thaliana (Mouse-ear cress).